A 118-amino-acid polypeptide reads, in one-letter code: Large ribosomal subunit protein bL20 (118 aa).

Belongs to the bacterial ribosomal protein bL20 family.

In terms of biological role, binds directly to 23S ribosomal RNA and is necessary for the in vitro assembly process of the 50S ribosomal subunit. It is not involved in the protein synthesizing functions of that subunit. The polypeptide is Large ribosomal subunit protein bL20 (Gluconobacter oxydans (strain 621H) (Gluconobacter suboxydans)).